Here is a 308-residue protein sequence, read N- to C-terminus: Ornithine carbamoyltransferase (308 aa).

Residues 53–56, Q80, R104, and 131–134 each bind carbamoyl phosphate; these read STRT and HPCQ. L-ornithine is bound by residues N162, D225, and 229–230; that span reads SM. Residues 265 to 266 and R293 each bind carbamoyl phosphate; that span reads CL.

Belongs to the aspartate/ornithine carbamoyltransferase superfamily. OTCase family.

The protein localises to the cytoplasm. It carries out the reaction carbamoyl phosphate + L-ornithine = L-citrulline + phosphate + H(+). It participates in amino-acid biosynthesis; L-arginine biosynthesis; L-arginine from L-ornithine and carbamoyl phosphate: step 1/3. In terms of biological role, reversibly catalyzes the transfer of the carbamoyl group from carbamoyl phosphate (CP) to the N(epsilon) atom of ornithine (ORN) to produce L-citrulline. The protein is Ornithine carbamoyltransferase (argF) of Synechocystis sp. (strain ATCC 27184 / PCC 6803 / Kazusa).